Here is a 511-residue protein sequence, read N- to C-terminus: MNNELILVLDFGGQYNQLIARRVREANVYCEVLPYNSSIDKIKSKNPKGIIFTGGPASVLDPKAPICDREVFELGIPILGICYGMQLMSHMLGGTVEKAEQREYGKVNITFDTSSMLFEGIEKESTCWMSHTYYVNNLPEGFVKCADTPNCPVAAIENREKKLYGVQFHPEVVHTPKGRDILNNFLYKICGCSGDWKMASFIEHSINSIREKVGDKKVLCALSGGVDSSVAAVLVHKAVGKQLTCIFVDHGLLRKYEGDQVEEVFKKQFDISLIRVNAEDRFLEKLKGVTDPERKRKIIGEEFIRVFEEEAKKIGTVDFLVQGTIYPDVIESGVGDAAVIKSHHNVGGLPDYIDFKEIIEPLRSLFKDEVRKVGIELGIPEDIVMRQPFPGPGLAVRVIGEVTKEKVDILRDADYIFREEIKNAGLDREINQYFAVLTGMRSVGVMGDERTYDYTLALRAVTTIDFMTADWAKIPYDVLEKVSNRIVNEVKHINRIVYDITTKPPATIEWE.

Residues 5–195 enclose the Glutamine amidotransferase type-1 domain; the sequence is LILVLDFGGQ…LYKICGCSGD (191 aa). Cys82 functions as the Nucleophile in the catalytic mechanism. Residues His169 and Glu171 contribute to the active site. The 191-residue stretch at 196–386 folds into the GMPS ATP-PPase domain; the sequence is WKMASFIEHS…LGIPEDIVMR (191 aa). Position 223-229 (223-229) interacts with ATP; it reads SGGVDSS.

Homodimer.

The enzyme catalyses XMP + L-glutamine + ATP + H2O = GMP + L-glutamate + AMP + diphosphate + 2 H(+). Its pathway is purine metabolism; GMP biosynthesis; GMP from XMP (L-Gln route): step 1/1. Its function is as follows. Catalyzes the synthesis of GMP from XMP. In Acetivibrio thermocellus (strain ATCC 27405 / DSM 1237 / JCM 9322 / NBRC 103400 / NCIMB 10682 / NRRL B-4536 / VPI 7372) (Clostridium thermocellum), this protein is GMP synthase [glutamine-hydrolyzing].